The sequence spans 100 residues: Small ubiquitin-related modifier 1 (100 aa).

Positions Met-1–Ala-12 are enriched in basic and acidic residues. The interval Met-1–Leu-23 is disordered. A Ubiquitin-like domain is found at Ala-19–Gly-96. Residue Gly-96 forms a Glycyl lysine isopeptide (Gly-Lys) (interchain with K-? in acceptor proteins) linkage.

It belongs to the ubiquitin family. SUMO subfamily. In terms of assembly, interacts with SAE2, SCE1 and SIZ1. Covalently attached to a number of proteins.

It localises to the nucleus. Its subcellular location is the cytoplasm. In terms of biological role, ubiquitin-like protein which can be covalently attached to target lysines as a monomer. Does not seem to be involved in protein degradation and may function as an antagonist of ubiquitin in the degradation process. This Oryza sativa subsp. japonica (Rice) protein is Small ubiquitin-related modifier 1 (SUMO1).